Consider the following 405-residue polypeptide: L-rhamnonate dehydratase (405 aa).

Substrate contacts are provided by His33 and Arg59. Mg(2+) is bound by residues Asp226, Glu252, and Glu280. His329 functions as the Proton acceptor in the catalytic mechanism. Residue Glu349 coordinates substrate.

This sequence belongs to the mandelate racemase/muconate lactonizing enzyme family. RhamD subfamily. As to quaternary structure, homooctamer; tetramer of dimers. Mg(2+) is required as a cofactor.

The enzyme catalyses L-rhamnonate = 2-dehydro-3-deoxy-L-rhamnonate + H2O. Its function is as follows. Catalyzes the dehydration of L-rhamnonate to 2-keto-3-deoxy-L-rhamnonate (KDR). This is L-rhamnonate dehydratase from Escherichia coli O81 (strain ED1a).